Reading from the N-terminus, the 80-residue chain is Acyl carrier protein (80 aa).

Residues 4-79 (DATLEKVRSI…DAVKYIEDKQ (76 aa)) form the Carrier domain. S39 is modified (O-(pantetheine 4'-phosphoryl)serine).

The protein belongs to the acyl carrier protein (ACP) family. 4'-phosphopantetheine is transferred from CoA to a specific serine of apo-ACP by AcpS. This modification is essential for activity because fatty acids are bound in thioester linkage to the sulfhydryl of the prosthetic group.

Its subcellular location is the cytoplasm. It participates in lipid metabolism; fatty acid biosynthesis. Carrier of the growing fatty acid chain in fatty acid biosynthesis. The protein is Acyl carrier protein of Prochlorococcus marinus (strain MIT 9211).